A 1090-amino-acid polypeptide reads, in one-letter code: Neurofilament heavy polypeptide (1090 aa).

Residues 2–98 (MSFGSADALL…AVAARSEKEQ (97 aa)) form a head region. Ser74 and Ser122 each carry phosphoserine. In terms of domain architecture, IF rod spans 95–411 (EKEQLQALND…KLLEGEECRI (317 aa)). Residues 99–130 (LQALNDRFAGYIDKVRQLEAHNRSLEGEAAAL) are coil 1A. Positions 131–143 (RQQQAGRAAMGEL) are linker 1. The coil 1B stretch occupies residues 144–242 (YEREVREMRG…QEEVGELLGQ (99 aa)). Residues 243 to 264 (IQGCGAAQAQAQAEARDALKCD) are linker 12. Positions 265-286 (VTSALREIRAQLEGHAVQSTLQ) are coil 2A. The tract at residues 287–290 (SEEW) is linker 2. The interval 291–411 (FRVRLDRLSE…KLLEGEECRI (121 aa)) is coil 2B. Phosphoserine occurs at positions 345, 416, and 419. Positions 412 to 1090 (GFGPSPFSLT…TEDKATKGEK (679 aa)) are tail. Positions 456–1090 (EGQTEEIRVT…TEDKATKGEK (635 aa)) are disordered. Positions 468 to 495 (VTEEEDKEAQGQEGEEAEEGEEKEEEEG) are enriched in acidic residues. Residues 496-506 (AAATSPPAEEA) show a composition bias toward low complexity. 43 positions are modified to phosphoserine: Ser508, Ser523, Ser529, Ser535, Ser541, Ser547, Ser553, Ser559, Ser565, Ser571, Ser577, Ser583, Ser589, Ser595, Ser601, Ser607, Ser613, Ser619, Ser625, Ser631, Ser637, Ser643, Ser649, Ser655, Ser661, Ser667, Ser673, Ser679, Ser685, Ser691, Ser697, Ser703, Ser709, Ser715, Ser721, Ser727, Ser733, Ser739, Ser745, Ser751, Ser757, Ser763, and Ser769. Residues 508–579 (SPEKETKSRV…KSPAEAKSPA (72 aa)) show a composition bias toward basic and acidic residues. 42 consecutive repeat copies span residues 522 to 527 (KSPGEA), 528 to 533 (KSPGEA), 534 to 539 (KSPAEA), 540 to 545 (KSPGEA), 546 to 551 (KSPGEA), 552 to 557 (KSPGEA), 558 to 563 (KSPAEP), 564 to 569 (KSPAEP), 570 to 575 (KSPAEA), 576 to 581 (KSPAEP), 582 to 587 (KSPATV), 588 to 593 (KSPGEA), 594 to 599 (KSPSEA), 600 to 605 (KSPAEA), 606 to 611 (KSPAEA), 612 to 617 (KSPAEA), 618 to 623 (KSPAEA), 624 to 629 (KSPAEA), 630 to 635 (KSPAEA), 636 to 641 (KSPATV), 642 to 647 (KSPGEA), 648 to 653 (KSPSEA), 654 to 659 (KSPAEA), 660 to 665 (KSPAEA), 666 to 671 (KSPAEA), 672 to 677 (KSPAEV), 678 to 683 (KSPGEA), 684 to 689 (KSPAEP), 690 to 695 (KSPAEA), 696 to 701 (KSPAEV), 702 to 707 (KSPAEA), 708 to 713 (KSPAEV), 714 to 719 (KSPGEA), 720 to 725 (KSPAAV), 726 to 731 (KSPAEA), 732 to 737 (KSPAAV), 738 to 743 (KSPGEA), 744 to 749 (KSPGEA), 750 to 755 (KSPAEA), 756 to 761 (KSPAEA), 762 to 767 (KSPIEV), and 768 to 773 (KSPEKA). The interval 522–892 (KSPGEAKSPG…KEEVKSPVKE (371 aa)) is 52 X 6 AA approximate tandem repeats of K-S-P-[AGISV]-[EATK]-[APVQ]. The segment covering 595–633 (SPSEAKSPAEAKSPAEAKSPAEAKSPAEAKSPAEAKSPA) has biased composition (basic and acidic residues). Residues 649–717 (SPSEAKSPAE…KSPAEVKSPG (69 aa)) are compositionally biased toward basic and acidic residues. A compositionally biased stretch (basic and acidic residues) spans 745 to 781 (SPGEAKSPAEAKSPAEAKSPIEVKSPEKAKTPVKEGA). The 43; approximate repeat unit spans residues 774 to 779 (KTPVKE). A run of 6 repeats spans residues 782–787 (KSPAEA), 788–793 (KSPEKA), 794–799 (KSPVKE), 808–813 (KSPEKA), 814–819 (KSPVKE), and 833–838 (KSPEAQ). A phosphoserine mark is found at Ser783, Ser789, Ser795, Ser809, Ser815, and Ser834. The span at 788-834 (KSPEKAKSPVKEDIKPPAEAKSPEKAKSPVKEGAKPPEKAKPLDVKS) shows a compositional bias: basic and acidic residues. Thr839 carries the post-translational modification Phosphothreonine. Composition is skewed to basic and acidic residues over residues 843-964 (EEAK…KAVA) and 974-1090 (GVKE…KGEK). Repeat copies occupy residues 858–863 (KSPAKE), 866–871 (KSPEKE), and 887–892 (KSPVKE). Phosphoserine is present on residues Ser859, Ser867, Ser888, and Ser947.

This sequence belongs to the intermediate filament family. In terms of assembly, forms heterodimers with NEFL; which can further hetero-oligomerize (in vitro). Forms heterodimers with INA (in vitro). There are a number of repeats of the tripeptide K-S-P, NFH is phosphorylated on a number of the serines in this motif. It is thought that phosphorylation of NFH results in the formation of interfilament cross bridges that are important in the maintenance of axonal caliber. Post-translationally, phosphorylation seems to play a major role in the functioning of the larger neurofilament polypeptides (NF-M and NF-H), the levels of phosphorylation being altered developmentally and coincidentally with a change in the neurofilament function. In terms of processing, phosphorylated in the head and rod regions by the PKC kinase PKN1, leading to the inhibition of polymerization. In terms of tissue distribution, expressed in the sciatic nerve (at protein level).

It localises to the cytoplasm. Its subcellular location is the cytoskeleton. The protein localises to the cell projection. It is found in the axon. Its function is as follows. Neurofilaments usually contain three intermediate filament proteins: NEFL, NEFM, and NEFH which are involved in the maintenance of neuronal caliber. NEFH has an important function in mature axons that is not subserved by the two smaller NF proteins. May additionally cooperate with the neuronal intermediate filament proteins PRPH and INA to form neuronal filamentous networks. This Mus musculus (Mouse) protein is Neurofilament heavy polypeptide (Nefh).